The chain runs to 416 residues: Iron-regulated transcriptional activator AFT2 (416 aa).

Aspartate 53 provides a ligand contact to Zn(2+). 9 residues coordinate DNA: arginine 54, histidine 55, lysine 58, isoleucine 74, glutamate 75, arginine 76, serine 77, aspartate 78, and lysine 81. Zn(2+) is bound at residue histidine 55. Residue cysteine 86 participates in Zn(2+) binding. Serine 88 contacts DNA. Residue cysteine 109 participates in Zn(2+) binding. Residues valine 119 and arginine 120 each contribute to the DNA site. 2 residues coordinate Zn(2+): histidine 133 and histidine 135. DNA contacts are provided by glutamine 157 and asparagine 159. Residues cysteine 187–cysteine 189 carry the CDC [2Fe-2S] cluster binding motif motif.

Homodimer. Dimerization decreases the DNA-binding activity.

It localises to the nucleus. Dimerization via the binding of Fe(2+) or a [2Fe-2S] cluster decreases the DNA-binding activity. Its function is as follows. Transcription factor required for iron homeostasis and resistance to oxidative stress. With AFT1, activates the gene expression in response to low-iron conditions, also called iron regulon. Recognizes the consensus iron-responsive element (Fe-RE) sequence 5'-CACCC-3' in the promoters of target genes. The transcription activation by AFT1 and AFT2 depends on the mitochondrial iron-sulfur protein biosynthesis pathway. In high iron condition, the presence of iron leads to dimerization, which in turn leads to a decrease in DNA affinity. In Saccharomyces cerevisiae (strain ATCC 204508 / S288c) (Baker's yeast), this protein is Iron-regulated transcriptional activator AFT2.